Consider the following 70-residue polypeptide: Large ribosomal subunit protein uL29 (70 aa).

It belongs to the universal ribosomal protein uL29 family.

This Clostridium botulinum (strain ATCC 19397 / Type A) protein is Large ribosomal subunit protein uL29.